Here is a 119-residue protein sequence, read N- to C-terminus: Large ribosomal subunit protein uL18 (119 aa).

Belongs to the universal ribosomal protein uL18 family. As to quaternary structure, part of the 50S ribosomal subunit; part of the 5S rRNA/L5/L18/L25 subcomplex. Contacts the 5S and 23S rRNAs.

Functionally, this is one of the proteins that bind and probably mediate the attachment of the 5S RNA into the large ribosomal subunit, where it forms part of the central protuberance. This chain is Large ribosomal subunit protein uL18, found in Endomicrobium trichonymphae.